The chain runs to 334 residues: Desumoylating isopeptidase 1 homolog (334 aa).

Residues 30 to 174 enclose the PPPDE domain; it reads TVVRLNVYDM…FLEKCIPQEW (145 aa). Catalysis depends on residues histidine 55 and cysteine 133. The span at 310-325 shows a compositional bias: polar residues; sequence SNIGKTNSTPGTTSNG. Residues 310–334 are disordered; it reads SNIGKTNSTPGTTSNGLAKPTCSEC.

It belongs to the DeSI family. Expressed in the pharynx, hypodermis, intestine, head neuron and tail neuron.

It is found in the cytoplasm. The protein resides in the nucleus. In terms of biological role, protease which deconjugates SUMO from some substrate proteins. Has isopeptidase but not SUMO-processing activity. Collaborates with ubql-1 in the export of ubiquitinated proteins from the nucleus to the cytoplasm. The sequence is that of Desumoylating isopeptidase 1 homolog from Caenorhabditis elegans.